The primary structure comprises 124 residues: Keratin-associated protein 12-2 (124 aa).

A run of 20 repeats spans residues 10 to 13 (CQAA), 14 to 18 (CVPSS), 19 to 23 (CQPSC), 24 to 28 (STSSP), 33 to 38 (CFTSSL), 39 to 43 (CQPTC), 44 to 48 (STSST), 49 to 52 (CQAT), 53 to 57 (CVPVS), 58 to 62 (YRPAV), 63 to 67 (CLPVT), 68 to 72 (YKPTL), 73 to 77 (CVTPS), 78 to 82 (CQSSV), 83 to 87 (FLPVS), 88 to 92 (YRPAV), 98 to 102 (CQSSG), 103 to 107 (CYQPS), 108 to 112 (CPTLV), and 113 to 117 (YRPIS). The 20 X 5 AA approximate repeats stretch occupies residues 10–117 (CQAACVPSSC…CPTLVYRPIS (108 aa)).

The protein belongs to the KRTAP type 12 family. Interacts with hair keratins.

Its function is as follows. In the hair cortex, hair keratin intermediate filaments are embedded in an interfilamentous matrix, consisting of hair keratin-associated proteins (KRTAP), which are essential for the formation of a rigid and resistant hair shaft through their extensive disulfide bond cross-linking with abundant cysteine residues of hair keratins. The matrix proteins include the high-sulfur and high-glycine-tyrosine keratins. The polypeptide is Keratin-associated protein 12-2 (Bos taurus (Bovine)).